The following is a 350-amino-acid chain: Core protein VP7 (350 aa).

The N-linked (GlcNAc...) asparagine; by host glycan is linked to N45.

This sequence belongs to the orbivirus VP7 family. As to quaternary structure, homotrimer.

Its subcellular location is the virion. Major structural core protein; binds to structural protein VP3. Constitutes the surface of the AHSV core. This African horse sickness virus (AHSV) protein is Core protein VP7 (Segment-7).